Consider the following 299-residue polypeptide: Trimeric intracellular cation channel type A (299 aa).

Over 1–18 (MELLSALSLGELALSFSR) the chain is Lumenal. The chain crosses the membrane as a helical span at residues 19–39 (VPLFPVFDLSYFIVSILYLKY). The Cytoplasmic portion of the chain corresponds to 40–51 (EPGAVELSRRHP). The chain crosses the membrane as a helical span at residues 52–72 (IASWLCAMLHCFGSYILADLL). Topologically, residues 73 to 85 (LGEPLIDYFSNNS) are lumenal. Glycine 74 serves as a coordination point for Ca(2+). A helical membrane pass occupies residues 86-106 (SILLASAVWYLIFFCPLDLFY). The Cytoplasmic segment spans residues 107–144 (KCVCFLPVKLIFVAMKEVVRVRKIAVGIHHAHHHYHHG). The a 1,2-diacyl-sn-glycero-3-phospho-(1D-myo-inositol-4,5-bisphosphate) site is built by lysine 122 and arginine 126. The chain crosses the membrane as a helical span at residues 145 to 165 (WFVMIATGWVKGSGVALMSNF). Topologically, residues 166 to 178 (EQLLRGVWKPETN) are lumenal. Residues 179–199 (EILHMSFPTKASLYGAILFTL) traverse the membrane as a helical segment. The Cytoplasmic segment spans residues 200–209 (QQTRWLPVSK). Residues 210 to 230 (ASLIFIFTLFMVSCKVFLTAT) traverse the membrane as a helical segment. At 231–234 (HSHS) the chain is on the lumenal side. Residues 235-255 (SPFDALEGYICPVLFGSACGG) form a helical membrane-spanning segment. The Cytoplasmic segment spans residues 256 to 299 (DHHHDNHGGSHSGGGPGAQHSAMPAKSKEELSEGSRKKKAKKAD). Residues 260-299 (DNHGGSHSGGGPGAQHSAMPAKSKEELSEGSRKKKAKKAD) form a disordered region. Positions 281–290 (KSKEELSEGS) are enriched in basic and acidic residues.

It belongs to the TMEM38 family. As to quaternary structure, homotrimer; conformation seems to be controled by binding to diacylglycerol (DAG).

The protein localises to the sarcoplasmic reticulum membrane. It is found in the nucleus membrane. It carries out the reaction K(+)(in) = K(+)(out). Its activity is regulated as follows. Channel activity is activated by a change of voltage within the sarcoplasmic reticulum lumen and blocked by luminal high Ca(2+) levels. Functionally, intracellular monovalent cation channel required for maintenance of rapid intracellular calcium release. Acts as a potassium counter-ion channel that functions in synchronization with calcium release from intracellular stores. Opened by a change of voltage within the sarcoplasmic reticulum lumen. The sequence is that of Trimeric intracellular cation channel type A from Homo sapiens (Human).